Consider the following 239-residue polypeptide: Tetraspanin-9 (239 aa).

Over 1-13 (MARGCLCCVKYMM) the chain is Cytoplasmic. A helical transmembrane segment spans residues 14–34 (FLFNLLFWLSGCGLLGVGIWL). Residues 35–55 (SVSQGSFATFSPSFPSLSAAN) are Extracellular-facing. Residues 56–76 (LVITLGSVVMVTGFLGCLGAI) traverse the membrane as a helical segment. Topologically, residues 77 to 85 (KENKCLLLS) are cytoplasmic. Residues 86–106 (FFIVLLIILLAELILLILFFV) traverse the membrane as a helical segment. Residues 107–203 (YTEKVSENAK…VEEWLNDNKH (97 aa)) are Extracellular-facing. Residue asparagine 180 is glycosylated (N-linked (GlcNAc...) asparagine). A helical membrane pass occupies residues 204 to 224 (LLGTIAMCVLVLQLLGMAFSM). Topologically, residues 225-239 (TLYQQIHRAGKKYDA) are cytoplasmic.

It belongs to the tetraspanin (TM4SF) family.

It localises to the membrane. In Danio rerio (Zebrafish), this protein is Tetraspanin-9 (tspan9).